The sequence spans 567 residues: Geraniol synthase, chloroplastic (567 aa).

Residues 1–63 (MSCARITVTL…GDNSQRKNTR (63 aa)) constitute a chloroplast transit peptide. The segment at 48 to 75 (STPLINGDNSQRKNTRQHMEESSSKRRE) is disordered. Over residues 64 to 75 (QHMEESSSKRRE) the composition is skewed to basic and acidic residues. Residues arginine 286, aspartate 323, aspartate 327, arginine 466, and aspartate 469 each coordinate (2E)-geranyl diphosphate. Mn(2+)-binding residues include aspartate 323 and aspartate 327. Residues 323 to 327 (DDIFD) carry the DDXXD motif motif. Aspartate 469, threonine 473, and glutamate 477 together coordinate Mn(2+).

It belongs to the terpene synthase family. Tpsb subfamily. In terms of assembly, homodimer. Mn(2+) serves as cofactor. As to expression, expressed in the peltate glandular trichomes of the leaves.

The protein resides in the plastid. It is found in the chloroplast. It catalyses the reaction (2E)-geranyl diphosphate + H2O = (2E)-geraniol + diphosphate. Its pathway is secondary metabolite biosynthesis; terpenoid biosynthesis. Functionally, monoterpene synthase that catalyzes the formation of geraniol from geranyl diphosphate. This chain is Geraniol synthase, chloroplastic (GES), found in Ocimum basilicum (Sweet basil).